Reading from the N-terminus, the 547-residue chain is MGDGNLKKSKLSWPKTLVKKWLNIKSKSEDFHADDLDRGEGGGDWRNNVIEREEACSVRKSKTETRSKRNSGRARRNKLDVDPPLDHLRVFTATWNVAGKSPPSYLNLDDWLHTSPPSDIYVLGFQEIVPLNAGNVLGTEDNGPARKWVSLIRRTLNSLPGGSCQTPSPVPHPVAELDSDFEGDSAAGANSLFYHRSRSMRMDASASSLPQQFDRRFSVCDRFMLGDTPDDFYDQSFRYCSSEDEPADSPCHDHYSPVSRTGSFVADDRDKGRDKSKYCLVASKQMVGIFLTVWVKSDLRDSVNNLKVSCVGRGLMGYLGNKGSISISMSVHQTSFCFVCSHLTSGQKEGDELRRNSDVLEILRKTRFPRVNNAGDDKSPQMISEHDRVIWLGDLNYRIALSYRSAKALVEMRDWRALLEKDQLRIEQRKGCVFEGWKEGTIYFPPTYKYSNNSDIYAGDDRLPKAKRRTPAWCDRILWHGSGISQLSYVRGESRFSDHRPVYSLFSVEIESAYRNRIKKSSSYTSSRIEVEELLPQRYGYSELNPY.

Over residues 56–67 (CSVRKSKTETRS) the composition is skewed to basic and acidic residues. The disordered stretch occupies residues 56-80 (CSVRKSKTETRSKRNSGRARRNKLD). Catalytic regions lie at residues 387 to 402 (DRVI…IALS) and 467 to 482 (KRRT…WHGS).

Belongs to the inositol polyphosphate 5-phosphatase family.

The sequence is that of Type I inositol polyphosphate 5-phosphatase 4 from Arabidopsis thaliana (Mouse-ear cress).